The sequence spans 154 residues: Superoxide dismutase [Cu-Zn] (154 aa).

H47, H49, and H64 together coordinate Cu cation. C58 and C147 are oxidised to a cystine. Zn(2+) is bound by residues H64, H72, H81, and D84. H121 is a binding site for Cu cation. R144 is a binding site for substrate.

It belongs to the Cu-Zn superoxide dismutase family. In terms of assembly, homodimer. Cu cation is required as a cofactor. Zn(2+) serves as cofactor.

Its subcellular location is the cytoplasm. It carries out the reaction 2 superoxide + 2 H(+) = H2O2 + O2. In terms of biological role, destroys radicals which are normally produced within the cells and which are toxic to biological systems. This is Superoxide dismutase [Cu-Zn] (SOD1) from Candida albicans (Yeast).